A 295-amino-acid chain; its full sequence is Taste receptor type 2 member 120 (295 aa).

The Extracellular segment spans residues 1–5 (MNLVE). The chain crosses the membrane as a helical span at residues 6 to 26 (WIVTIIMMTEFLLGNCANVFI). Residues 27–45 (TIVNFIDCVKRRKISSADR) are Cytoplasmic-facing. Residues 46–66 (IITAIAIFRIGLLWAMLTNWH) traverse the membrane as a helical segment. Over 67-80 (SHVFTPDTDNLQMR) the chain is Extracellular. The helical transmembrane segment at 81–101 (VFGGITWAITNHFTTWLGTIL) threads the bilayer. The Cytoplasmic portion of the chain corresponds to 102–127 (SMFYLFKIANFSNSLFLHLKRKLDNV). A helical membrane pass occupies residues 128–148 (LLVIFLGSSLFLVAYLGMVNI). At 149–177 (KKIAWMSIHEGNVTTKSKLKHVTSITNML) the chain is on the extracellular side. A glycan (N-linked (GlcNAc...) asparagine) is linked at asparagine 160. Residues 178 to 198 (LFSLINIVPFGISLNCVLLLI) form a helical membrane-spanning segment. The Cytoplasmic portion of the chain corresponds to 199-228 (YSLSKHLKNMKFYGKGCQDQSTMVHIKALQ). The helical transmembrane segment at 229–249 (TVVSFLLLYATYSSCVIISGW) threads the bilayer. At 250 to 255 (SLQNAP) the chain is on the extracellular side. The chain crosses the membrane as a helical span at residues 256 to 276 (VFLFCVTIGSFYPAGHSCILI). At 277–295 (WGNQKLKQVFLLLLRQMRC) the chain is on the cytoplasmic side.

The protein belongs to the G-protein coupled receptor T2R family.

It localises to the membrane. In terms of biological role, putative taste receptor which may play a role in the perception of bitterness. The chain is Taste receptor type 2 member 120 from Mus musculus (Mouse).